Consider the following 210-residue polypeptide: Glycerol-3-phosphate acyltransferase (210 aa).

5 helical membrane-spanning segments follow: residues 1-21 (MLLS…FPAG), 53-73 (GPAL…VVAA), 87-107 (IAWL…LPVW), 122-142 (VLLA…LLLL), and 147-167 (IVSL…LILP).

Belongs to the PlsY family. Probably interacts with PlsX.

It localises to the cell inner membrane. The catalysed reaction is an acyl phosphate + sn-glycerol 3-phosphate = a 1-acyl-sn-glycero-3-phosphate + phosphate. Its pathway is lipid metabolism; phospholipid metabolism. In terms of biological role, catalyzes the transfer of an acyl group from acyl-phosphate (acyl-PO(4)) to glycerol-3-phosphate (G3P) to form lysophosphatidic acid (LPA). This enzyme utilizes acyl-phosphate as fatty acyl donor, but not acyl-CoA or acyl-ACP. The chain is Glycerol-3-phosphate acyltransferase from Synechococcus elongatus (strain ATCC 33912 / PCC 7942 / FACHB-805) (Anacystis nidulans R2).